Consider the following 264-residue polypeptide: Glutamate racemase (264 aa).

Substrate is bound by residues 12-13 (DS) and 44-45 (YG). C75 acts as the Proton donor/acceptor in catalysis. 76–77 (NT) contacts substrate. Catalysis depends on C186, which acts as the Proton donor/acceptor. 187 to 188 (TH) contributes to the substrate binding site.

It belongs to the aspartate/glutamate racemases family.

It carries out the reaction L-glutamate = D-glutamate. The protein operates within cell wall biogenesis; peptidoglycan biosynthesis. In terms of biological role, provides the (R)-glutamate required for cell wall biosynthesis. The protein is Glutamate racemase of Stutzerimonas stutzeri (strain A1501) (Pseudomonas stutzeri).